Here is a 431-residue protein sequence, read N- to C-terminus: GTPase Obg (431 aa).

Residues 1 to 158 form the Obg domain; the sequence is MFVDQVKINV…REIRLELKVL (158 aa). The segment at 125–145 is disordered; the sequence is GNIHFASPKNPAPEIAENGEP. The OBG-type G domain occupies 159 to 335; it reads ADVGLVGFPS…LLQRTADMLA (177 aa). GTP-binding positions include 165 to 172, 190 to 194, 212 to 215, 282 to 285, and 316 to 318; these read GFPSVGKS, FTTLV, DLPG, NKMD, and SAL. Mg(2+) contacts are provided by Ser172 and Thr192. Residues 353–431 enclose the OCT domain; that stretch reads YNFQPEAEFT…IDDFTFEYMA (79 aa).

This sequence belongs to the TRAFAC class OBG-HflX-like GTPase superfamily. OBG GTPase family. In terms of assembly, monomer. Mg(2+) is required as a cofactor.

It localises to the cytoplasm. In terms of biological role, an essential GTPase which binds GTP, GDP and possibly (p)ppGpp with moderate affinity, with high nucleotide exchange rates and a fairly low GTP hydrolysis rate. Plays a role in control of the cell cycle, stress response, ribosome biogenesis and in those bacteria that undergo differentiation, in morphogenesis control. In Levilactobacillus brevis (strain ATCC 367 / BCRC 12310 / CIP 105137 / JCM 1170 / LMG 11437 / NCIMB 947 / NCTC 947) (Lactobacillus brevis), this protein is GTPase Obg.